The chain runs to 747 residues: Polyribonucleotide nucleotidyltransferase (747 aa).

The Mg(2+) site is built by Asp487 and Asp493. A KH domain is found at 554-613; that stretch reads PSTTTIKIDKDKIRDIIGPGGKIIKEICETSGAKIDISDDGTVSVYAADRDKLKIASDKI. The S1 motif domain maps to 623–691; it reads GEIFNGTVTK…NKGKAKLTIK (69 aa). A disordered region spans residues 694-716; the sequence is DKDKSLNNPKPQNSINNAKENSE. Residues 699–712 are compositionally biased toward polar residues; sequence LNNPKPQNSINNAK.

The protein belongs to the polyribonucleotide nucleotidyltransferase family. The cofactor is Mg(2+).

It localises to the cytoplasm. It carries out the reaction RNA(n+1) + phosphate = RNA(n) + a ribonucleoside 5'-diphosphate. Involved in mRNA degradation. Catalyzes the phosphorolysis of single-stranded polyribonucleotides processively in the 3'- to 5'-direction. The sequence is that of Polyribonucleotide nucleotidyltransferase from Rickettsia canadensis (strain McKiel).